The following is a 252-amino-acid chain: Thiazole synthase (252 aa).

Lys91 acts as the Schiff-base intermediate with DXP in catalysis. 1-deoxy-D-xylulose 5-phosphate is bound by residues Gly152, 179 to 180, and 201 to 202; these read AG and NT.

This sequence belongs to the ThiG family. As to quaternary structure, homotetramer. Forms heterodimers with either ThiH or ThiS.

The protein localises to the cytoplasm. It catalyses the reaction [ThiS sulfur-carrier protein]-C-terminal-Gly-aminoethanethioate + 2-iminoacetate + 1-deoxy-D-xylulose 5-phosphate = [ThiS sulfur-carrier protein]-C-terminal Gly-Gly + 2-[(2R,5Z)-2-carboxy-4-methylthiazol-5(2H)-ylidene]ethyl phosphate + 2 H2O + H(+). It participates in cofactor biosynthesis; thiamine diphosphate biosynthesis. Functionally, catalyzes the rearrangement of 1-deoxy-D-xylulose 5-phosphate (DXP) to produce the thiazole phosphate moiety of thiamine. Sulfur is provided by the thiocarboxylate moiety of the carrier protein ThiS. In vitro, sulfur can be provided by H(2)S. The sequence is that of Thiazole synthase from Erwinia pyrifoliae (strain DSM 12162 / Ep1/96).